Reading from the N-terminus, the 43-residue chain is Protein PsbN (43 aa).

Residues 7–27 (LSIAIGSILLVITGFAIYTAF) traverse the membrane as a helical segment.

Belongs to the PsbN family.

The protein resides in the cellular thylakoid membrane. In terms of biological role, may play a role in photosystem I and II biogenesis. The sequence is that of Protein PsbN from Crocosphaera subtropica (strain ATCC 51142 / BH68) (Cyanothece sp. (strain ATCC 51142)).